The following is a 241-amino-acid chain: MORN repeat-containing protein 3 (241 aa).

Residues 6-35 (CPQKSEPLWKEWDQKAQKNGLRHQVFAVNG) form an interaction with MDM2 region. MORN repeat units lie at residues 38–60 (YVGEWKDNVKHGKGTQVWKKNGA), 62–84 (YEGDWKSGKRDGYGTLSLPDQET), 91–113 (YSGWWKGDKKCGYGIQFFGPKEY), 114–136 (YEGDWCGNQRSGWGRMYYSNGDI), 137–159 (YEGQWRNDKPEGEGMLRLKNGNR), 160–182 (YEGNWQRGVKNGSGRFFHLDHGQ), and 184–205 (FEGFWVDDVAKCGTMIDFGRDE). The segment at 76 to 100 (TLSLPDQETGKYKRAYSGWWKGDKK) is interaction with SIRT1. Residues 206–240 (APQPTQFPIPEVKILDPDGVLEEALAMFKKTKEEG) are interaction with TP53.

As to quaternary structure, interacts with MEIG1. Interacts with TP53, MDM2 and SIRT1; the interactions mediate post-transcriptional modifications of TP53 by MDM2 and SIRT1.

The protein resides in the cytoplasmic vesicle. Its subcellular location is the secretory vesicle. It localises to the acrosome. In terms of biological role, assembles a suppression complex (suppresome) by tethering SIRT1 and MDM2 to regulate composite modifications of p53/TP53. Confers both deacetylation-mediated functional inactivation, by SIRT1, and ubiquitination-dependent degradation, by MDM2, of p53/TP53, promoting a proliferative and cell survival behaviors. May play a role in the regulation of spermatogenesis. This is MORN repeat-containing protein 3 (MORN3) from Bos taurus (Bovine).